A 205-amino-acid polypeptide reads, in one-letter code: Dephospho-CoA kinase (205 aa).

Residues 7–204 (LVGLTGGIGS…ARYLAAARAT (198 aa)) form the DPCK domain. 15–20 (GSGKSA) is a binding site for ATP.

The protein belongs to the CoaE family.

Its subcellular location is the cytoplasm. The catalysed reaction is 3'-dephospho-CoA + ATP = ADP + CoA + H(+). Its pathway is cofactor biosynthesis; coenzyme A biosynthesis; CoA from (R)-pantothenate: step 5/5. Functionally, catalyzes the phosphorylation of the 3'-hydroxyl group of dephosphocoenzyme A to form coenzyme A. This is Dephospho-CoA kinase from Aromatoleum aromaticum (strain DSM 19018 / LMG 30748 / EbN1) (Azoarcus sp. (strain EbN1)).